Here is a 559-residue protein sequence, read N- to C-terminus: Glucose-6-phosphate isomerase (559 aa).

Glu363 serves as the catalytic Proton donor. Active-site residues include His394 and Lys523.

This sequence belongs to the GPI family.

Its subcellular location is the cytoplasm. It carries out the reaction alpha-D-glucose 6-phosphate = beta-D-fructose 6-phosphate. Its pathway is carbohydrate biosynthesis; gluconeogenesis. It functions in the pathway carbohydrate degradation; glycolysis; D-glyceraldehyde 3-phosphate and glycerone phosphate from D-glucose: step 2/4. Its function is as follows. Catalyzes the reversible isomerization of glucose-6-phosphate to fructose-6-phosphate. The sequence is that of Glucose-6-phosphate isomerase from Bartonella quintana (strain Toulouse) (Rochalimaea quintana).